Consider the following 267-residue polypeptide: Phosphatidylglycerol--prolipoprotein diacylglyceryl transferase (267 aa).

3 helical membrane-spanning segments follow: residues 21–41 (VSLHWYGIMYLLGFGFAYWLG), 60–80 (LLFNGFWGVVLGGRIGDVFFY), and 95–115 (IWEGGMSFHGGLLGVIVAMLW). A 1,2-diacyl-sn-glycero-3-phospho-(1'-sn-glycerol) is bound at residue Arg143. A run of 2 helical transmembrane segments spans residues 203-223 (GSVAGLFLVGYGVFRFIVEYF) and 240-260 (GQLLSLPMIIGGLVIMVVAYY).

The protein belongs to the Lgt family.

It localises to the cell inner membrane. The enzyme catalyses L-cysteinyl-[prolipoprotein] + a 1,2-diacyl-sn-glycero-3-phospho-(1'-sn-glycerol) = an S-1,2-diacyl-sn-glyceryl-L-cysteinyl-[prolipoprotein] + sn-glycerol 1-phosphate + H(+). It functions in the pathway protein modification; lipoprotein biosynthesis (diacylglyceryl transfer). Functionally, catalyzes the transfer of the diacylglyceryl group from phosphatidylglycerol to the sulfhydryl group of the N-terminal cysteine of a prolipoprotein, the first step in the formation of mature lipoproteins. The polypeptide is Phosphatidylglycerol--prolipoprotein diacylglyceryl transferase (Glaesserella parasuis serovar 5 (strain SH0165) (Haemophilus parasuis)).